The sequence spans 277 residues: Tryptophan synthase alpha chain (277 aa).

Active-site proton acceptor residues include E51 and E62.

The protein belongs to the TrpA family. As to quaternary structure, tetramer of two alpha and two beta chains.

It catalyses the reaction (1S,2R)-1-C-(indol-3-yl)glycerol 3-phosphate + L-serine = D-glyceraldehyde 3-phosphate + L-tryptophan + H2O. It functions in the pathway amino-acid biosynthesis; L-tryptophan biosynthesis; L-tryptophan from chorismate: step 5/5. In terms of biological role, the alpha subunit is responsible for the aldol cleavage of indoleglycerol phosphate to indole and glyceraldehyde 3-phosphate. The sequence is that of Tryptophan synthase alpha chain from Phenylobacterium zucineum (strain HLK1).